A 1111-amino-acid chain; its full sequence is MSVSGDDSDDYFDHEIDDVIVPGTPDAVKSAQTDNRPAKRRRLDAGVFDESDISIDQGDGEDEFQSPDRRSVNAVQSEDVERTSKYKVFVPKRKNFQENIFVTQLTQPPSPPEMIRGPRWKKPGPEPLAPKPTTTTVDASHQPDQYYDEDKEIEAAIAASLRSFEEENGGNIPSTASRSTPALTAVAPSAALKEAAADVPFNLDDIPDDAFDSDLSLSPPRTTSQATRGPPVQSQFRTNRPLGLRQSTLFDMAARNSDIPSQRGEQILSPPEKNEPPTHHKLNEEAINTWVYPTNLGKTRDYQFNIAQRGLFHNLLVALPTGLGKTFIAATIMLNWYRWTKSAQIIFVAPTKPLVAQQISACFQVAGIPRSQTTMLTGEAAPGIRAEEWKSKRVFFMTPQTLVNDLKSGIADPKRIVLLVVDEAHRATGGYAYVEVVKFLKRYNKSFRVLALTATPGSTVESVQAVIDGLGIAKVEIRTEQSLDIREYVHARDTEVQTFKNSDEMVLCMELFTRTLQPLVDQLRNLNAYWGRDPMALTAFGLTKARQQWMGSDAGRNANLGLKGKVNAIFTVLASLAHAIDLLKYHGITPFYRHLLHFQSNTDGQKGGKYQRQIVQDESFKKLMNHLQPWTKNPEFIGHPKLEYLKQVVLNHFMDRGEGTAANGDQSQSATRIMIFVHFRDSAEEVVRVLKRYEPLIRPHVFVGQSSAKGSEGMDQKTQLSIVQKFKKGTYNTIVATSIGEEGLDIGEVDLIVCYDSSASPIRMLQRMGRTGRKRAGNIVLLLMQGKEEESYIKAKDNYEKMQQMIASGTRFTFHDDTSPRILPPGVRPVAEKRQIDIPVENTQADLPEPRKRARPPKRPPKKFHMPDDVETGFAKASSLTGKVTKKAETKKAVRKPTPEPVEVPALEEVLLTPGEQQDLERRYCHIGGTSPEFIRNPRVDAYPRLQSVPRPTKAIKHGSLTSRMIGTLQKMSKVSVDCERRYRKVLALESSKEIVDSVLSREPGSPAQNSGRLGKKPHAFKRPSATSRPNNVHVREDENEDNCTPELLSPEKLMSSFLEPHTERPPYSSQRSQDAFELDFPDVETLLNRSAERHVSRKRNRFVLDDDTEE.

2 stretches are compositionally biased toward acidic residues: residues 1 to 18 (MSVSGDDSDDYFDHEIDD) and 47 to 65 (VFDESDISIDQGDGEDEFQ). 4 disordered regions span residues 1-81 (MSVS…EDVE), 101-144 (FVTQ…HQPD), 210-240 (AFDSDLSLSPPRTTSQATRGPPVQSQFRTNR), and 259-280 (IPSQRGEQILSPPEKNEPPTHH). Polar residues-rich tracts occupy residues 132 to 143 (PTTTTVDASHQP) and 215 to 238 (LSLSPPRTTSQATRGPPVQSQFRT). The Helicase ATP-binding domain maps to 306–474 (IAQRGLFHNL…AVIDGLGIAK (169 aa)). 319-326 (LPTGLGKT) contributes to the ATP binding site. Positions 422–425 (DEAH) match the DEAH box motif. The Helicase C-terminal domain maps to 644-818 (YLKQVVLNHF…GTRFTFHDDT (175 aa)). Disordered regions lie at residues 836-898 (IDIP…RKPT), 998-1047 (SVLS…CTPE), and 1092-1111 (AERHVSRKRNRFVLDDDTEE). Basic residues predominate over residues 852–864 (KRARPPKRPPKKF).

Belongs to the DEAD box helicase family. DEAH subfamily. FANCM sub-subfamily. Interacts with the MHF histone-fold complex to form the FANCM-MHF complex.

Its subcellular location is the nucleus. It carries out the reaction ATP + H2O = ADP + phosphate + H(+). ATP-dependent DNA helicase involved in DNA damage repair by homologous recombination and in genome maintenance. Capable of unwinding D-loops. Plays a role in limiting crossover recombinants during mitotic DNA double-strand break (DSB) repair. Component of a FANCM-MHF complex which promotes gene conversion at blocked replication forks, probably by reversal of the stalled fork. The sequence is that of ATP-dependent DNA helicase mph1 from Neosartorya fischeri (strain ATCC 1020 / DSM 3700 / CBS 544.65 / FGSC A1164 / JCM 1740 / NRRL 181 / WB 181) (Aspergillus fischerianus).